Consider the following 308-residue polypeptide: Ornithine carbamoyltransferase (308 aa).

Carbamoyl phosphate contacts are provided by residues 52–55 (STRT), Gln79, Arg103, and 130–133 (HPLQ). L-ornithine is bound by residues Asn162, Asp224, and 228–229 (SM). Carbamoyl phosphate is bound by residues 264–265 (CL) and Arg292.

The protein belongs to the aspartate/ornithine carbamoyltransferase superfamily. OTCase family.

The protein localises to the cytoplasm. It carries out the reaction carbamoyl phosphate + L-ornithine = L-citrulline + phosphate + H(+). Its pathway is amino-acid biosynthesis; L-arginine biosynthesis; L-arginine from L-ornithine and carbamoyl phosphate: step 1/3. Functionally, reversibly catalyzes the transfer of the carbamoyl group from carbamoyl phosphate (CP) to the N(epsilon) atom of ornithine (ORN) to produce L-citrulline. The sequence is that of Ornithine carbamoyltransferase from Pyrobaculum calidifontis (strain DSM 21063 / JCM 11548 / VA1).